A 689-amino-acid polypeptide reads, in one-letter code: ATP-dependent zinc metalloprotease FtsH 2 (689 aa).

Over 1-3 (MRK) the chain is Cytoplasmic. A helical transmembrane segment spans residues 4 to 24 (FFRGASFYILAFIIILFIVQN). Over 25 to 111 (FGRPTQEIDE…SAAPPPTTPW (87 aa)) the chain is Extracellular. The chain crosses the membrane as a helical span at residues 112–132 (FIELLPSIFMVLIFIVFWFVF). The Cytoplasmic segment spans residues 133–689 (MQQSQGGGNR…QDNEENRKEE (557 aa)). ATP is bound at residue 205 to 212 (GPPGTGKT). His427 contacts Zn(2+). Residue Glu428 is part of the active site. Positions 431 and 503 each coordinate Zn(2+). Residues 661-673 (EELIEVSSDKEEE) show a composition bias toward basic and acidic residues. Residues 661-689 (EELIEVSSDKEEEKDNQDDQDNEENRKEE) are disordered.

It in the central section; belongs to the AAA ATPase family. The protein in the C-terminal section; belongs to the peptidase M41 family. As to quaternary structure, homohexamer. Requires Zn(2+) as cofactor.

The protein localises to the cell membrane. Acts as a processive, ATP-dependent zinc metallopeptidase for both cytoplasmic and membrane proteins. Plays a role in the quality control of integral membrane proteins. The chain is ATP-dependent zinc metalloprotease FtsH 2 from Alkaliphilus metalliredigens (strain QYMF).